The chain runs to 1322 residues: Phosphoribosylformylglycinamidine synthase (1322 aa).

Position 300 to 311 (300 to 311 (GASTGAGGEIRD)) interacts with ATP. The segment covering 593–608 (QQTPQRANHTETSPTP) has biased composition (polar residues). The disordered stretch occupies residues 593–613 (QQTPQRANHTETSPTPNTLPP). Residue A702 participates in ATP binding. Residues D703, E742, N746, and D915 each contribute to the Mg(2+) site. An ATP-binding site is contributed by S917. The region spanning 1073–1322 (VAILREQGIN…LFRNARAWVG (250 aa)) is the Glutamine amidotransferase type-1 domain. C1166 serves as the catalytic Nucleophile. Active-site residues include H1287 and E1289.

This sequence in the N-terminal section; belongs to the FGAMS family. As to quaternary structure, monomer.

It localises to the cytoplasm. It catalyses the reaction N(2)-formyl-N(1)-(5-phospho-beta-D-ribosyl)glycinamide + L-glutamine + ATP + H2O = 2-formamido-N(1)-(5-O-phospho-beta-D-ribosyl)acetamidine + L-glutamate + ADP + phosphate + H(+). The protein operates within purine metabolism; IMP biosynthesis via de novo pathway; 5-amino-1-(5-phospho-D-ribosyl)imidazole from N(2)-formyl-N(1)-(5-phospho-D-ribosyl)glycinamide: step 1/2. Phosphoribosylformylglycinamidine synthase involved in the purines biosynthetic pathway. Catalyzes the ATP-dependent conversion of formylglycinamide ribonucleotide (FGAR) and glutamine to yield formylglycinamidine ribonucleotide (FGAM) and glutamate. The sequence is that of Phosphoribosylformylglycinamidine synthase from Xylella fastidiosa (strain 9a5c).